The following is a 377-amino-acid chain: MAAAAQSRVVRVLSMSRSAITAIATSVCHGPPCRQLHHALMPHGKGGRSSVSGIVATVFGATGFLGRYVVNHLGRMGSQVIIPYRCDKYDIMHLRPMGDLGQLLFLEWDARDKDSIRRVVQHSNVVINLIGRDWETKNYDFEDVFVKIPQAIAQLSKEAGVEKFIHVSHLNANIKSSSRYLRNKAVGEKVVRDAFPEAIIIKPSDIFGREDRFLNSFASMHRFGPIPLGSLGWKTVKQPVYVVDVSKGIVNAVKDPDANGKSFAFVGPSRYLLFHLVKYIFAVAHRLFLPFPLPLFAYRWVARVFEISPFEPWITRDKVERMHITDMKLPHLPGLEDLGIQATPLELKAIEVLRRHRTYRWLSAEIEDVKPAKTVNI.

The N-terminal 35 residues, 1–35, are a transit peptide targeting the mitochondrion; that stretch reads MAAAAQSRVVRVLSMSRSAITAIATSVCHGPPCRQ. Lys-175 carries the N6-succinyllysine modification. An N6-acetyllysine mark is found at Lys-189 and Lys-370.

This sequence belongs to the complex I NDUFA9 subunit family. As to quaternary structure, complex I is composed of 45 different subunits. This a component of the hydrophobic protein fraction. Interacts with BLOC1S1. Interacts with SLC2A4. Interacts with CLOCK. Interacts with RAB5IF. It depends on FAD as a cofactor. Acetylated on lysine residues. BLOC1S1 is required for acetylation. Acetylated by CLOCK in a circadian manner.

Its subcellular location is the mitochondrion matrix. Functionally, accessory subunit of the mitochondrial membrane respiratory chain NADH dehydrogenase (Complex I), that is believed not to be involved in catalysis. Complex I functions in the transfer of electrons from NADH to the respiratory chain. The immediate electron acceptor for the enzyme is believed to be ubiquinone. This is NADH dehydrogenase [ubiquinone] 1 alpha subcomplex subunit 9, mitochondrial (NDUFA9) from Pan troglodytes (Chimpanzee).